A 203-amino-acid chain; its full sequence is N-(5'-phosphoribosyl)anthranilate isomerase (203 aa).

It belongs to the TrpF family.

The enzyme catalyses N-(5-phospho-beta-D-ribosyl)anthranilate = 1-(2-carboxyphenylamino)-1-deoxy-D-ribulose 5-phosphate. It participates in amino-acid biosynthesis; L-tryptophan biosynthesis; L-tryptophan from chorismate: step 3/5. This is N-(5'-phosphoribosyl)anthranilate isomerase from Sulfurihydrogenibium sp. (strain YO3AOP1).